A 64-amino-acid polypeptide reads, in one-letter code: Phylloxin-S1 (64 aa).

Residues 1–22 (MVFLKKSLLLVLFVGLVSLSIC) form the signal peptide. Residues 23 to 44 (EENKREEHEEVEENAEKAEEKR) constitute a propeptide that is removed on maturation. Position 63 is a glutamine amide (glutamine 63).

As to expression, expressed by the skin glands.

It is found in the secreted. Its function is as follows. Antimicrobial peptide against both Gram-positive and Gram-negative bacteria. The sequence is that of Phylloxin-S1 from Phyllomedusa sauvagei (Sauvage's leaf frog).